Reading from the N-terminus, the 497-residue chain is Acetyl-coenzyme A carboxylase carboxyl transferase subunit beta, chloroplastic (497 aa).

The segment at 30–50 (GPVENTTVNEDPTRNDTDKNI) is disordered. Over residues 40-50 (DPTRNDTDKNI) the composition is skewed to basic and acidic residues. The CoA carboxyltransferase N-terminal domain maps to 230 to 497 (VQCECENCYG…FFPLNQNSIK (268 aa)). Cysteine 232, cysteine 237, cysteine 253, and cysteine 256 together coordinate Zn(2+). The segment at 232–256 (CECENCYGVNYKKSLNSKMNICEQC) adopts a C4-type zinc-finger fold.

This sequence belongs to the AccD/PCCB family. Acetyl-CoA carboxylase is a heterohexamer composed of biotin carboxyl carrier protein, biotin carboxylase and 2 subunits each of ACCase subunit alpha and ACCase plastid-coded subunit beta (accD). Requires Zn(2+) as cofactor.

The protein resides in the plastid. It localises to the chloroplast stroma. The enzyme catalyses N(6)-carboxybiotinyl-L-lysyl-[protein] + acetyl-CoA = N(6)-biotinyl-L-lysyl-[protein] + malonyl-CoA. The protein operates within lipid metabolism; malonyl-CoA biosynthesis; malonyl-CoA from acetyl-CoA: step 1/1. Functionally, component of the acetyl coenzyme A carboxylase (ACC) complex. Biotin carboxylase (BC) catalyzes the carboxylation of biotin on its carrier protein (BCCP) and then the CO(2) group is transferred by the transcarboxylase to acetyl-CoA to form malonyl-CoA. This Gossypium hirsutum (Upland cotton) protein is Acetyl-coenzyme A carboxylase carboxyl transferase subunit beta, chloroplastic.